A 189-amino-acid polypeptide reads, in one-letter code: Elongation factor P (189 aa).

It belongs to the elongation factor P family.

It localises to the cytoplasm. The protein operates within protein biosynthesis; polypeptide chain elongation. Its function is as follows. Involved in peptide bond synthesis. Stimulates efficient translation and peptide-bond synthesis on native or reconstituted 70S ribosomes in vitro. Probably functions indirectly by altering the affinity of the ribosome for aminoacyl-tRNA, thus increasing their reactivity as acceptors for peptidyl transferase. The sequence is that of Elongation factor P from Rhizobium leguminosarum bv. trifolii (strain WSM2304).